The following is a 1064-amino-acid chain: Carbamoyl phosphate synthase large chain (1064 aa).

The tract at residues 1–401 (MPKRNDIKKI…SLLKAVRSLE (401 aa)) is carboxyphosphate synthetic domain. Positions 129, 169, 175, 176, 208, 210, 215, 241, 242, 243, 284, and 298 each coordinate ATP. One can recognise an ATP-grasp 1 domain in the interval 133 to 327 (KELCESINEP…IAKMSAKIAI (195 aa)). The Mg(2+) site is built by Q284, E298, and N300. Residues Q284, E298, and N300 each coordinate Mn(2+). The tract at residues 402–546 (IGVFHNEMTE…YSTYEWENES (145 aa)) is oligomerization domain. A carbamoyl phosphate synthetic domain region spans residues 547-929 (KRSDKEKIIV…ALYKSFEAAK (383 aa)). Residues 671–861 (EKALQDLDIP…MAQLATQMIL (191 aa)) enclose the ATP-grasp 2 domain. ATP contacts are provided by R707, S746, L748, E752, G777, V778, H779, S780, Q820, and E832. 3 residues coordinate Mg(2+): Q820, E832, and N834. Q820, E832, and N834 together coordinate Mn(2+). In terms of domain architecture, MGS-like spans 930 to 1064 (LHMADYGSVL…QSRSFTTKNI (135 aa)). An allosteric domain region spans residues 930–1064 (LHMADYGSVL…QSRSFTTKNI (135 aa)).

Belongs to the CarB family. As to quaternary structure, composed of two chains; the small (or glutamine) chain promotes the hydrolysis of glutamine to ammonia, which is used by the large (or ammonia) chain to synthesize carbamoyl phosphate. Tetramer of heterodimers (alpha,beta)4. Mg(2+) is required as a cofactor. Mn(2+) serves as cofactor.

The catalysed reaction is hydrogencarbonate + L-glutamine + 2 ATP + H2O = carbamoyl phosphate + L-glutamate + 2 ADP + phosphate + 2 H(+). It carries out the reaction hydrogencarbonate + NH4(+) + 2 ATP = carbamoyl phosphate + 2 ADP + phosphate + 2 H(+). The protein operates within amino-acid biosynthesis; L-arginine biosynthesis; carbamoyl phosphate from bicarbonate: step 1/1. It functions in the pathway pyrimidine metabolism; UMP biosynthesis via de novo pathway; (S)-dihydroorotate from bicarbonate: step 1/3. Functionally, large subunit of the glutamine-dependent carbamoyl phosphate synthetase (CPSase). CPSase catalyzes the formation of carbamoyl phosphate from the ammonia moiety of glutamine, carbonate, and phosphate donated by ATP, constituting the first step of 2 biosynthetic pathways, one leading to arginine and/or urea and the other to pyrimidine nucleotides. The large subunit (synthetase) binds the substrates ammonia (free or transferred from glutamine from the small subunit), hydrogencarbonate and ATP and carries out an ATP-coupled ligase reaction, activating hydrogencarbonate by forming carboxy phosphate which reacts with ammonia to form carbamoyl phosphate. The chain is Carbamoyl phosphate synthase large chain from Lactococcus lactis subsp. cremoris (strain MG1363).